Here is a 93-residue protein sequence, read N- to C-terminus: Putative septation protein SpoVG (93 aa).

This sequence belongs to the SpoVG family.

Its function is as follows. Could be involved in septation. The chain is Putative septation protein SpoVG from Fusobacterium nucleatum subsp. nucleatum (strain ATCC 25586 / DSM 15643 / BCRC 10681 / CIP 101130 / JCM 8532 / KCTC 2640 / LMG 13131 / VPI 4355).